We begin with the raw amino-acid sequence, 186 residues long: Ribosome-recycling factor (186 aa).

It belongs to the RRF family.

The protein resides in the cytoplasm. Functionally, responsible for the release of ribosomes from messenger RNA at the termination of protein biosynthesis. May increase the efficiency of translation by recycling ribosomes from one round of translation to another. This chain is Ribosome-recycling factor, found in Burkholderia ambifaria (strain ATCC BAA-244 / DSM 16087 / CCUG 44356 / LMG 19182 / AMMD) (Burkholderia cepacia (strain AMMD)).